A 180-amino-acid chain; its full sequence is Crossover junction endodeoxyribonuclease RuvC (180 aa).

Active-site residues include Asp7, Glu66, and Asp138. Mg(2+) contacts are provided by Asp7, Glu66, and Asp138.

This sequence belongs to the RuvC family. As to quaternary structure, homodimer which binds Holliday junction (HJ) DNA. The HJ becomes 2-fold symmetrical on binding to RuvC with unstacked arms; it has a different conformation from HJ DNA in complex with RuvA. In the full resolvosome a probable DNA-RuvA(4)-RuvB(12)-RuvC(2) complex forms which resolves the HJ. It depends on Mg(2+) as a cofactor.

Its subcellular location is the cytoplasm. It carries out the reaction Endonucleolytic cleavage at a junction such as a reciprocal single-stranded crossover between two homologous DNA duplexes (Holliday junction).. In terms of biological role, the RuvA-RuvB-RuvC complex processes Holliday junction (HJ) DNA during genetic recombination and DNA repair. Endonuclease that resolves HJ intermediates. Cleaves cruciform DNA by making single-stranded nicks across the HJ at symmetrical positions within the homologous arms, yielding a 5'-phosphate and a 3'-hydroxyl group; requires a central core of homology in the junction. The consensus cleavage sequence is 5'-(A/T)TT(C/G)-3'. Cleavage occurs on the 3'-side of the TT dinucleotide at the point of strand exchange. HJ branch migration catalyzed by RuvA-RuvB allows RuvC to scan DNA until it finds its consensus sequence, where it cleaves and resolves the cruciform DNA. This Burkholderia vietnamiensis (strain G4 / LMG 22486) (Burkholderia cepacia (strain R1808)) protein is Crossover junction endodeoxyribonuclease RuvC.